A 372-amino-acid polypeptide reads, in one-letter code: Alanine racemase (372 aa).

Lys-48 serves as the catalytic Proton acceptor; specific for D-alanine. Lys-48 carries the post-translational modification N6-(pyridoxal phosphate)lysine. A substrate-binding site is contributed by Arg-143. Tyr-268 serves as the catalytic Proton acceptor; specific for L-alanine. Met-316 provides a ligand contact to substrate.

It belongs to the alanine racemase family. The cofactor is pyridoxal 5'-phosphate.

It carries out the reaction L-alanine = D-alanine. The protein operates within amino-acid biosynthesis; D-alanine biosynthesis; D-alanine from L-alanine: step 1/1. In terms of biological role, catalyzes the interconversion of L-alanine and D-alanine. May also act on other amino acids. This Vibrio vulnificus (strain YJ016) protein is Alanine racemase (alr).